A 498-amino-acid polypeptide reads, in one-letter code: Polygalacturonan/rhamnogalacturonan-binding protein YtcQ (498 aa).

The first 22 residues, 1–22, serve as a signal peptide directing secretion; that stretch reads MGNKWRVLLIVLVLALGGVLAG. Cys23 carries N-palmitoyl cysteine lipidation. Cys23 carries S-diacylglycerol cysteine lipidation.

It belongs to the bacterial solute-binding protein 1 family. In terms of assembly, the complex is probably composed of two ATP-binding proteins (MsmX), two transmembrane proteins (YtcP and YteP) and a solute-binding protein (YtcQ).

It localises to the cell membrane. In terms of biological role, involved in pectin degradation. Part of the ABC transporter complex YtcQP-YteP involved in the uptake of polygalacturonan and rhamnogalacturonan type I. The polypeptide is Polygalacturonan/rhamnogalacturonan-binding protein YtcQ (ytcQ) (Bacillus subtilis (strain 168)).